The primary structure comprises 628 residues: Dihydroxy-acid dehydratase (628 aa).

Asp80 is a binding site for Mg(2+). Cys121 contributes to the [2Fe-2S] cluster binding site. Mg(2+) is bound by residues Asp122 and Lys123. Lys123 carries the post-translational modification N6-carboxylysine. Position 207 (Cys207) interacts with [2Fe-2S] cluster. Mg(2+) is bound at residue Glu503. Ser529 functions as the Proton acceptor in the catalytic mechanism.

Belongs to the IlvD/Edd family. In terms of assembly, homodimer. [2Fe-2S] cluster is required as a cofactor. It depends on Mg(2+) as a cofactor.

It carries out the reaction (2R)-2,3-dihydroxy-3-methylbutanoate = 3-methyl-2-oxobutanoate + H2O. The enzyme catalyses (2R,3R)-2,3-dihydroxy-3-methylpentanoate = (S)-3-methyl-2-oxopentanoate + H2O. The protein operates within amino-acid biosynthesis; L-isoleucine biosynthesis; L-isoleucine from 2-oxobutanoate: step 3/4. It participates in amino-acid biosynthesis; L-valine biosynthesis; L-valine from pyruvate: step 3/4. Its function is as follows. Functions in the biosynthesis of branched-chain amino acids. Catalyzes the dehydration of (2R,3R)-2,3-dihydroxy-3-methylpentanoate (2,3-dihydroxy-3-methylvalerate) into 2-oxo-3-methylpentanoate (2-oxo-3-methylvalerate) and of (2R)-2,3-dihydroxy-3-methylbutanoate (2,3-dihydroxyisovalerate) into 2-oxo-3-methylbutanoate (2-oxoisovalerate), the penultimate precursor to L-isoleucine and L-valine, respectively. The chain is Dihydroxy-acid dehydratase from Psychrobacter arcticus (strain DSM 17307 / VKM B-2377 / 273-4).